A 557-amino-acid polypeptide reads, in one-letter code: Trigger factor (557 aa).

One can recognise a PPIase FKBP-type domain in the interval G169–P255. Residues W438 to K557 are disordered. Positions S455–S466 are enriched in basic and acidic residues.

It belongs to the FKBP-type PPIase family. Tig subfamily.

The protein localises to the cytoplasm. It catalyses the reaction [protein]-peptidylproline (omega=180) = [protein]-peptidylproline (omega=0). Involved in protein export. Acts as a chaperone by maintaining the newly synthesized protein in an open conformation. Functions as a peptidyl-prolyl cis-trans isomerase. This chain is Trigger factor, found in Synechococcus sp. (strain JA-3-3Ab) (Cyanobacteria bacterium Yellowstone A-Prime).